A 615-amino-acid polypeptide reads, in one-letter code: DNA mismatch repair protein MutL (615 aa).

Residues 370–397 (EPVAPRYTPAPASGSRPAAPWPNTQPGY) are disordered. A compositionally biased stretch (low complexity) spans 378–391 (PAPASGSRPAAPWP).

This sequence belongs to the DNA mismatch repair MutL/HexB family.

Functionally, this protein is involved in the repair of mismatches in DNA. It is required for dam-dependent methyl-directed DNA mismatch repair. May act as a 'molecular matchmaker', a protein that promotes the formation of a stable complex between two or more DNA-binding proteins in an ATP-dependent manner without itself being part of a final effector complex. This chain is DNA mismatch repair protein MutL, found in Shigella dysenteriae serotype 1 (strain Sd197).